A 136-amino-acid polypeptide reads, in one-letter code: Ribosome-binding factor A (136 aa).

Belongs to the RbfA family. Monomer. Binds 30S ribosomal subunits, but not 50S ribosomal subunits or 70S ribosomes.

The protein resides in the cytoplasm. In terms of biological role, one of several proteins that assist in the late maturation steps of the functional core of the 30S ribosomal subunit. Associates with free 30S ribosomal subunits (but not with 30S subunits that are part of 70S ribosomes or polysomes). Required for efficient processing of 16S rRNA. May interact with the 5'-terminal helix region of 16S rRNA. In Photorhabdus laumondii subsp. laumondii (strain DSM 15139 / CIP 105565 / TT01) (Photorhabdus luminescens subsp. laumondii), this protein is Ribosome-binding factor A.